The chain runs to 510 residues: 2,3-bisphosphoglycerate-independent phosphoglycerate mutase (510 aa).

Positions 12 and 62 each coordinate Mn(2+). Ser62 functions as the Phosphoserine intermediate in the catalytic mechanism. Substrate is bound by residues His123, 153–154, Arg185, Arg191, 260–263, and Lys333; these read RD and RPDR. Residues Asp400, His404, Asp441, His442, and His460 each coordinate Mn(2+).

This sequence belongs to the BPG-independent phosphoglycerate mutase family. As to quaternary structure, monomer. It depends on Mn(2+) as a cofactor.

The catalysed reaction is (2R)-2-phosphoglycerate = (2R)-3-phosphoglycerate. The protein operates within carbohydrate degradation; glycolysis; pyruvate from D-glyceraldehyde 3-phosphate: step 3/5. In terms of biological role, catalyzes the interconversion of 2-phosphoglycerate and 3-phosphoglycerate. This is 2,3-bisphosphoglycerate-independent phosphoglycerate mutase from Clostridium acetobutylicum (strain ATCC 824 / DSM 792 / JCM 1419 / IAM 19013 / LMG 5710 / NBRC 13948 / NRRL B-527 / VKM B-1787 / 2291 / W).